Consider the following 309-residue polypeptide: Malate dehydrogenase (309 aa).

NAD(+) contacts are provided by residues 9–14 (GAGFVG) and D33. R82 and R88 together coordinate substrate. Residues N95 and 118 to 120 (VNN) contribute to the NAD(+) site. 2 residues coordinate substrate: N120 and R151. The active-site Proton acceptor is H175.

This sequence belongs to the LDH/MDH superfamily. MDH type 3 family.

The enzyme catalyses (S)-malate + NAD(+) = oxaloacetate + NADH + H(+). Functionally, catalyzes the reversible oxidation of malate to oxaloacetate. In Chloroflexus aggregans (strain MD-66 / DSM 9485), this protein is Malate dehydrogenase.